Consider the following 338-residue polypeptide: Probable cytosolic iron-sulfur protein assembly protein Ciao1 (338 aa).

WD repeat units lie at residues 12-51, 58-97, 102-141, 147-186, 193-232, 234-252, 253-291, and 302-338; these read GHRG…RWVP, GHTR…FECN, GHEN…EYEC, THSQ…SDWS, SHDS…NEFG, ACPD…LSGF, HSRA…PANE, and AHSQ…EDDE.

It belongs to the WD repeat CIA1 family.

Functionally, essential component of the cytosolic iron-sulfur (Fe/S) protein assembly machinery. Required for the maturation of extramitochondrial Fe/S proteins. The chain is Probable cytosolic iron-sulfur protein assembly protein Ciao1 from Culex quinquefasciatus (Southern house mosquito).